The primary structure comprises 273 residues: Shikimate kinase (273 aa).

Position 85-95 (85-95 (PVGKGLKSSSA)) interacts with ATP.

Belongs to the GHMP kinase family. Archaeal shikimate kinase subfamily.

Its subcellular location is the cytoplasm. It catalyses the reaction shikimate + ATP = 3-phosphoshikimate + ADP + H(+). It participates in metabolic intermediate biosynthesis; chorismate biosynthesis; chorismate from D-erythrose 4-phosphate and phosphoenolpyruvate: step 5/7. This chain is Shikimate kinase, found in Pyrococcus furiosus (strain ATCC 43587 / DSM 3638 / JCM 8422 / Vc1).